The chain runs to 179 residues: Large ribosomal subunit protein uL5 (179 aa).

The protein belongs to the universal ribosomal protein uL5 family. Part of the 50S ribosomal subunit; part of the 5S rRNA/L5/L18/L25 subcomplex. Contacts the 5S rRNA and the P site tRNA. Forms a bridge to the 30S subunit in the 70S ribosome.

Functionally, this is one of the proteins that bind and probably mediate the attachment of the 5S RNA into the large ribosomal subunit, where it forms part of the central protuberance. In the 70S ribosome it contacts protein S13 of the 30S subunit (bridge B1b), connecting the 2 subunits; this bridge is implicated in subunit movement. Contacts the P site tRNA; the 5S rRNA and some of its associated proteins might help stabilize positioning of ribosome-bound tRNAs. This chain is Large ribosomal subunit protein uL5, found in Staphylococcus saprophyticus subsp. saprophyticus (strain ATCC 15305 / DSM 20229 / NCIMB 8711 / NCTC 7292 / S-41).